The chain runs to 544 residues: MESQRNILLIGLLFVSFLLWQQWQTDQAPQPVATQSSSVVTASSASDSHSSDVPDADSALPAAVVASKDLITVNTDQLIIKINPVGGDIVYSALVEHKLELENDEPFVLLEQTNDINYIAQSGLIGRDGIDSSVKGRAHFDSASRNYSLAAGQDTLEVPLTYVAENGATYTKMFIFHRGKFDVDVDYVIDNKTDKQLQVQMYGQIKHSIKKSESSMMMPTYRGAAFSTQDTRYEKYSFEDMADKNLDKKTLGGWAAMLQHYFVSAWVPPANDQNIIFSSISAGGQANIGFRGAIFDVAPGATQEITSQFYVGPKDQAALSAISPTLNLVVDYGFLWWLAVPIYKLLMFFQSIVGNWGAAIILITLTVRGLLYPLTKAQYTSMAKMRNLQPKLAEMKERFGDDRQKMGQAMMELYKKEKVNPMGGCLPILLQMPIFIALYWVLLESVELRHAPFMLWITDLSVQDPYYVMPILMGVSMFVMQKMQPMAPTMDPMQVKMMQWMPVVFTVFFLWFPAGLVLYWLVGNLVAIAQQKYIYAGLEKKGLK.

5 helical membrane-spanning segments follow: residues 6–26, 345–365, 423–443, 460–480, and 503–523; these read NILL…WQTD, LLMF…LITL, GGCL…WVLL, LSVQ…MFVM, and VVFT…WLVG.

The protein belongs to the OXA1/ALB3/YidC family. Type 1 subfamily. In terms of assembly, interacts with the Sec translocase complex via SecD. Specifically interacts with transmembrane segments of nascent integral membrane proteins during membrane integration.

It is found in the cell inner membrane. Functionally, required for the insertion and/or proper folding and/or complex formation of integral membrane proteins into the membrane. Involved in integration of membrane proteins that insert both dependently and independently of the Sec translocase complex, as well as at least some lipoproteins. Aids folding of multispanning membrane proteins. This Shewanella woodyi (strain ATCC 51908 / MS32) protein is Membrane protein insertase YidC.